Reading from the N-terminus, the 96-residue chain is Fruit-specific protein (96 aa).

Intrachain disulfides connect Cys-59–Cys-75, Cys-63–Cys-78, and Cys-69–Cys-92.

As to expression, fruit specific.

This chain is Fruit-specific protein (2A11), found in Solanum lycopersicum (Tomato).